Here is a 279-residue protein sequence, read N- to C-terminus: RxLR effector protein Avh331 (279 aa).

Residues 1–20 form the signal peptide; that stretch reads MMQWSAILIRTCFSGSGGEA. Positions 86-106 match the RxLR-dEER motif; sequence RSLRSQATNVDDDANVSIENR. A glycan (N-linked (GlcNAc...) asparagine) is linked at asparagine 100. The W1 motif stretch occupies residues 129-147; it reads ANKLWLMADVDPKSAFKLL. The tract at residues 153–174 is Y1 motif; sequence GVRFIDNPKMLQWLKFTKAYLD. Residues 178–208 form a l motif region; the sequence is SGFGETSAHALLYEKIGGPDLSLLLLSLKDA. A W2 motif region spans residues 222-240; it reads QFGMWHDARIEPEQLAQTV. A Y2 motif region spans residues 250–271; that stretch reads PKNDPKLQVIDDYAKYHRKHRK.

This sequence belongs to the RxLR effector family.

The protein localises to the secreted. Its subcellular location is the host cell. Functionally, effector that suppresses the host mitogen-activated protein kinase (MAPK)-based plant defense activated by the Phytophthora elicitor to promote colonization of the Phytophthora pathogen. Neither directly inhibits MAPK kinase activity nor interacts with MAPK proteins but acts downstream by suppressing transcriptional activation of resistance marker genes such as FRK1, WRKY22 and WRKY29. Confers avirulence in the presence of resistance protein Rps1k in host. The chain is RxLR effector protein Avh331 from Phytophthora sojae (strain P6497) (Soybean stem and root rot agent).